Reading from the N-terminus, the 66-residue chain is Large ribosomal subunit protein bL35 (66 aa).

Residues 1 to 16 are compositionally biased toward basic residues; that stretch reads MPKQKTHRASAKRFKR. Positions 1–21 are disordered; that stretch reads MPKQKTHRASAKRFKRTGSGG.

This sequence belongs to the bacterial ribosomal protein bL35 family.

This is Large ribosomal subunit protein bL35 from Streptococcus mutans serotype c (strain ATCC 700610 / UA159).